Reading from the N-terminus, the 110-residue chain is UPF0122 protein SE_0911 (110 aa).

Belongs to the UPF0122 family.

Might take part in the signal recognition particle (SRP) pathway. This is inferred from the conservation of its genetic proximity to ftsY/ffh. May be a regulatory protein. In Staphylococcus epidermidis (strain ATCC 12228 / FDA PCI 1200), this protein is UPF0122 protein SE_0911.